The sequence spans 430 residues: Tyrosine--tRNA ligase (430 aa).

Tyrosine 36 contributes to the L-tyrosine binding site. Positions 41–50 (PTASSLHVGS) match the 'HIGH' region motif. Tyrosine 170 and glutamine 174 together coordinate L-tyrosine. A 'KMSKS' region motif is present at residues 230 to 234 (KMGKT). Lysine 233 contributes to the ATP binding site. An S4 RNA-binding domain is found at 362–427 (VPAFELFDEI…GKKNYHRLVL (66 aa)).

The protein belongs to the class-I aminoacyl-tRNA synthetase family. TyrS type 1 subfamily. In terms of assembly, homodimer.

Its subcellular location is the cytoplasm. The enzyme catalyses tRNA(Tyr) + L-tyrosine + ATP = L-tyrosyl-tRNA(Tyr) + AMP + diphosphate + H(+). Functionally, catalyzes the attachment of tyrosine to tRNA(Tyr) in a two-step reaction: tyrosine is first activated by ATP to form Tyr-AMP and then transferred to the acceptor end of tRNA(Tyr). This is Tyrosine--tRNA ligase from Desulfatibacillum aliphaticivorans.